The primary structure comprises 511 residues: Ribosome biogenesis protein YTM1 (511 aa).

Residues 9 to 112 (VKVVFVTRDE…EVSLSIEYIR (104 aa)) form a ubiquitin-like (UBL) domain region. The sufficient for interaction with ERB1 and association with 66S pre-ribosomes stretch occupies residues 122–511 (SFSNPDWVAA…IQINNNPQSA (390 aa)). 7 WD repeats span residues 124–168 (SNPD…TGQL), 170–208 (GHNSAAKAVRWISNDQLVSGGSDRLLYLWNPDGKKYRRK), 248–287 (GHTAPINDLAVHAKTGKIISASADGSVGLWSTDYNDMPAI), 332–372 (GHSA…AVQS), 383–423 (TRST…QVAT), 429–470 (GHTN…SLHV), and 477–511 (TENNAVFGVDWKQNLGIVSGGQDNKIQINNNPQSA). Residues 207-228 (RKEPGQVGKKELNYDSEEDSDE) are disordered. Basic and acidic residues predominate over residues 208–219 (KEPGQVGKKELN).

It belongs to the WD repeat WDR12/YTM1 family. In terms of assembly, component of the NOP7 complex, composed of ERB1, NOP7 and YTM1. The complex is held together by ERB1, which interacts with NOP7 via its N-terminal domain and with YTM1 via a high-affinity interaction between the seven-bladed beta-propeller domains of the 2 proteins. The NOP7 complex associates with the 66S pre-ribosome. Interacts (via UBL domain) with MDN1 (via VWFA/MIDAS domain).

It is found in the nucleus. The protein localises to the nucleolus. It localises to the nucleoplasm. Component of the NOP7 complex, which is required for maturation of the 25S and 5.8S ribosomal RNAs and formation of the 60S ribosome. This Yarrowia lipolytica (strain CLIB 122 / E 150) (Yeast) protein is Ribosome biogenesis protein YTM1.